We begin with the raw amino-acid sequence, 321 residues long: Coproporphyrin III ferrochelatase (321 aa).

2 residues coordinate Fe(2+): His-185 and Glu-267.

The protein belongs to the ferrochelatase family.

The protein localises to the cytoplasm. The enzyme catalyses Fe-coproporphyrin III + 2 H(+) = coproporphyrin III + Fe(2+). The protein operates within porphyrin-containing compound metabolism; protoheme biosynthesis. Involved in coproporphyrin-dependent heme b biosynthesis. Catalyzes the insertion of ferrous iron into coproporphyrin III to form Fe-coproporphyrin III. The chain is Coproporphyrin III ferrochelatase from Lacticaseibacillus paracasei (strain ATCC 334 / BCRC 17002 / CCUG 31169 / CIP 107868 / KCTC 3260 / NRRL B-441) (Lactobacillus paracasei).